The chain runs to 33 residues: Defensin-1 (33 aa).

3 cysteine pairs are disulfide-bonded: cysteine 4–cysteine 32, cysteine 6–cysteine 21, and cysteine 11–cysteine 31.

It belongs to the alpha-defensin family.

The protein resides in the secreted. In terms of biological role, has antibacterial activity against the Gram-negative bacterium E.coli and the Gram-positive bacteria L.monocytogenes and S.aureus. Has antifungal activity against C.albicans. This chain is Defensin-1, found in Papio hamadryas (Hamadryas baboon).